The sequence spans 119 residues: Immunoglobulin heavy variable 3-49 (119 aa).

The N-terminal stretch at 1–19 (MEFGLSWVFLVAILKGVQC) is a signal peptide. The interval 20 to 44 (EVQLVESGGGLVQPGRSLRLSCTAS) is framework-1. In terms of domain architecture, Ig-like spans 20–119 (EVQLVESGGG…EDTAVYYCTR (100 aa)). Residues C41 and C117 are joined by a disulfide bond. The complementarity-determining-1 stretch occupies residues 45-52 (GFTFGDYA). Residues 53 to 69 (MSWVRQAPGKGLEWVGF) form a framework-2 region. The interval 70-79 (IRSKAYGGTT) is complementarity-determining-2. The framework-3 stretch occupies residues 80 to 117 (EYAASVKGRFTISRDDSKSIAYLQMNSLKTEDTAVYYC). Positions 118–119 (TR) are complementarity-determining-3.

As to quaternary structure, immunoglobulins are composed of two identical heavy chains and two identical light chains; disulfide-linked.

The protein resides in the secreted. It localises to the cell membrane. Functionally, v region of the variable domain of immunoglobulin heavy chains that participates in the antigen recognition. Immunoglobulins, also known as antibodies, are membrane-bound or secreted glycoproteins produced by B lymphocytes. In the recognition phase of humoral immunity, the membrane-bound immunoglobulins serve as receptors which, upon binding of a specific antigen, trigger the clonal expansion and differentiation of B lymphocytes into immunoglobulins-secreting plasma cells. Secreted immunoglobulins mediate the effector phase of humoral immunity, which results in the elimination of bound antigens. The antigen binding site is formed by the variable domain of one heavy chain, together with that of its associated light chain. Thus, each immunoglobulin has two antigen binding sites with remarkable affinity for a particular antigen. The variable domains are assembled by a process called V-(D)-J rearrangement and can then be subjected to somatic hypermutations which, after exposure to antigen and selection, allow affinity maturation for a particular antigen. The polypeptide is Immunoglobulin heavy variable 3-49 (Homo sapiens (Human)).